A 208-amino-acid polypeptide reads, in one-letter code: Small ribosomal subunit protein eS8 (208 aa).

Positions 1–34 are disordered; it reads MGISRDHWHKRRATGGKRAPIRKKRKYELGRPAA. The segment covering 7–26 has biased composition (basic residues); that stretch reads HWHKRRATGGKRAPIRKKRK.

This sequence belongs to the eukaryotic ribosomal protein eS8 family. Component of the small ribosomal subunit. Identified in a IGF2BP1-dependent mRNP granule complex containing untranslated mRNAs. Part of the small subunit (SSU) processome, composed of more than 70 proteins and the RNA chaperone small nucleolar RNA (snoRNA) U3.

The protein localises to the cytoplasm. It localises to the membrane. The protein resides in the nucleus. It is found in the nucleolus. Component of the small ribosomal subunit. The ribosome is a large ribonucleoprotein complex responsible for the synthesis of proteins in the cell. Part of the small subunit (SSU) processome, first precursor of the small eukaryotic ribosomal subunit. During the assembly of the SSU processome in the nucleolus, many ribosome biogenesis factors, an RNA chaperone and ribosomal proteins associate with the nascent pre-rRNA and work in concert to generate RNA folding, modifications, rearrangements and cleavage as well as targeted degradation of pre-ribosomal RNA by the RNA exosome. The sequence is that of Small ribosomal subunit protein eS8 (RpS8) from Spodoptera frugiperda (Fall armyworm).